Reading from the N-terminus, the 234-residue chain is Ribonuclease 3 (234 aa).

An RNase III domain is found at 4–133 (LLDLEHKLNY…ILGAVYIDSN (130 aa)). Residue glutamate 46 participates in Mg(2+) binding. Aspartate 50 is a catalytic residue. 2 residues coordinate Mg(2+): aspartate 119 and glutamate 122. Glutamate 122 is an active-site residue. The 69-residue stretch at 160 to 228 (DFKSILQEYV…AKALCIKLGV (69 aa)) folds into the DRBM domain.

Belongs to the ribonuclease III family. In terms of assembly, homodimer. It depends on Mg(2+) as a cofactor.

The protein resides in the cytoplasm. The enzyme catalyses Endonucleolytic cleavage to 5'-phosphomonoester.. Functionally, digests double-stranded RNA. Involved in the processing of primary rRNA transcript to yield the immediate precursors to the large and small rRNAs (23S and 16S). Processes some mRNAs, and tRNAs when they are encoded in the rRNA operon. Processes pre-crRNA and tracrRNA of type II CRISPR loci if present in the organism. In Fusobacterium nucleatum subsp. nucleatum (strain ATCC 25586 / DSM 15643 / BCRC 10681 / CIP 101130 / JCM 8532 / KCTC 2640 / LMG 13131 / VPI 4355), this protein is Ribonuclease 3.